The following is a 216-amino-acid chain: Trimethylamine corrinoid protein 1 (216 aa).

The B12-binding N-terminal domain occupies 1 to 92; the sequence is MASKEEIIAK…EMEKRKSETK (92 aa). A B12-binding domain is found at 94 to 216; the sequence is LGTVVIGTIE…VVSKVRAVLL (123 aa). H107 contributes to the methylcob(III)alamin binding site.

This sequence belongs to the methylamine corrinoid protein family. As to quaternary structure, can form a complex with MttB.

It functions in the pathway one-carbon metabolism; methanogenesis from trimethylamine. Its function is as follows. Acts probably as a methyl group carrier between MttB and either MtbA or MtaA. In Methanosarcina acetivorans (strain ATCC 35395 / DSM 2834 / JCM 12185 / C2A), this protein is Trimethylamine corrinoid protein 1 (mttC1).